A 389-amino-acid polypeptide reads, in one-letter code: Sinapine esterase (389 aa).

Positions 1–25 (MASSLKKLITSFLLFFFYTIIVASS) are cleaved as a signal peptide. Ser41 (nucleophile) is an active-site residue. N-linked (GlcNAc...) asparagine glycosylation is found at Asn104, Asn137, and Asn320. Active-site residues include Asp345 and His348. 2 N-linked (GlcNAc...) asparagine glycosylation sites follow: Asn372 and Asn383.

The protein belongs to the 'GDSL' lipolytic enzyme family. In terms of tissue distribution, expressed in most tissues or organs of the mature seedlings. Not expressed in roots of mature seedlings.

It is found in the secreted. The catalysed reaction is O-sinapoylcholine + H2O = (E)-sinapate + choline + H(+). Its activity is regulated as follows. Inhibited by PMSF. Its function is as follows. Sinapine esterase that catalyzes that hydrolysis of sinapine, releasing choline and sinapate. Sinapine (O-sinapoylcholine) is the predominant phenolic compound in a complex group of sinapate esters in seeds of oilseed rape (B.napus). Sinapine has antinutritive activity and prevents the use of seed protein for food and feed. Shows broad substrate specificity towards various other choline esters, including phosphatidylcholine. The protein is Sinapine esterase of Brassica napus (Rape).